Here is a 191-residue protein sequence, read N- to C-terminus: Dephospho-CoA kinase (191 aa).

Residues 3-191 (AIGITGSYAS…KLILVIARKL (189 aa)) form the DPCK domain. Position 11–16 (11–16 (ASGKTF)) interacts with ATP.

Belongs to the CoaE family.

The protein resides in the cytoplasm. The catalysed reaction is 3'-dephospho-CoA + ATP = ADP + CoA + H(+). It functions in the pathway cofactor biosynthesis; coenzyme A biosynthesis; CoA from (R)-pantothenate: step 5/5. Functionally, catalyzes the phosphorylation of the 3'-hydroxyl group of dephosphocoenzyme A to form coenzyme A. The chain is Dephospho-CoA kinase from Rickettsia felis (strain ATCC VR-1525 / URRWXCal2) (Rickettsia azadi).